We begin with the raw amino-acid sequence, 455 residues long: Bifunctional protein GlmU (455 aa).

Residues M1 to R230 form a pyrophosphorylase region. Residues L9–G12, K23, Q73, G78–T79, S101–D103, G140, E155, N170, and N228 each bind UDP-N-acetyl-alpha-D-glucosamine. Position 103 (D103) interacts with Mg(2+). N228 contacts Mg(2+). The segment at V231–E251 is linker. Residues G252–W455 are N-acetyltransferase. Positions 333 and 351 each coordinate UDP-N-acetyl-alpha-D-glucosamine. H363 acts as the Proton acceptor in catalysis. The UDP-N-acetyl-alpha-D-glucosamine site is built by Y366 and N377. Acetyl-CoA contacts are provided by residues N386 to Y387, S405, A423, and R440.

The protein in the N-terminal section; belongs to the N-acetylglucosamine-1-phosphate uridyltransferase family. This sequence in the C-terminal section; belongs to the transferase hexapeptide repeat family. As to quaternary structure, homotrimer. Mg(2+) is required as a cofactor.

The protein resides in the cytoplasm. It carries out the reaction alpha-D-glucosamine 1-phosphate + acetyl-CoA = N-acetyl-alpha-D-glucosamine 1-phosphate + CoA + H(+). The catalysed reaction is N-acetyl-alpha-D-glucosamine 1-phosphate + UTP + H(+) = UDP-N-acetyl-alpha-D-glucosamine + diphosphate. The protein operates within nucleotide-sugar biosynthesis; UDP-N-acetyl-alpha-D-glucosamine biosynthesis; N-acetyl-alpha-D-glucosamine 1-phosphate from alpha-D-glucosamine 6-phosphate (route II): step 2/2. It participates in nucleotide-sugar biosynthesis; UDP-N-acetyl-alpha-D-glucosamine biosynthesis; UDP-N-acetyl-alpha-D-glucosamine from N-acetyl-alpha-D-glucosamine 1-phosphate: step 1/1. Its pathway is bacterial outer membrane biogenesis; LPS lipid A biosynthesis. Its function is as follows. Catalyzes the last two sequential reactions in the de novo biosynthetic pathway for UDP-N-acetylglucosamine (UDP-GlcNAc). The C-terminal domain catalyzes the transfer of acetyl group from acetyl coenzyme A to glucosamine-1-phosphate (GlcN-1-P) to produce N-acetylglucosamine-1-phosphate (GlcNAc-1-P), which is converted into UDP-GlcNAc by the transfer of uridine 5-monophosphate (from uridine 5-triphosphate), a reaction catalyzed by the N-terminal domain. The chain is Bifunctional protein GlmU from Limosilactobacillus reuteri (strain DSM 20016) (Lactobacillus reuteri).